The sequence spans 133 residues: Ribosome-binding factor A (133 aa).

This sequence belongs to the RbfA family. In terms of assembly, monomer. Binds 30S ribosomal subunits, but not 50S ribosomal subunits or 70S ribosomes.

The protein resides in the cytoplasm. Functionally, one of several proteins that assist in the late maturation steps of the functional core of the 30S ribosomal subunit. Associates with free 30S ribosomal subunits (but not with 30S subunits that are part of 70S ribosomes or polysomes). Required for efficient processing of 16S rRNA. May interact with the 5'-terminal helix region of 16S rRNA. In Bordetella pertussis (strain Tohama I / ATCC BAA-589 / NCTC 13251), this protein is Ribosome-binding factor A.